A 153-amino-acid polypeptide reads, in one-letter code: Pheromone-binding protein Gp-9 (153 aa).

A signal peptide spans 1-19 (MKTFVLHIFIFAFVAFASA). Intrachain disulfides connect Cys37/Cys77, Cys73/Cys129, and Cys118/Cys138.

The protein belongs to the PBP/GOBP family. As to quaternary structure, homodimer.

It is found in the secreted. Colony queen number, a major feature of social organization, is associated with worker genotype for Gp-9. Colonies are headed by either a single reproductive queen (monogyne form) or multiple queens (polygyne form). Differences in worker Gp-9 genotypes between social forms may cause differences in workers' abilities to recognize queens and regulate their numbers. In Solenopsis geminata (Tropical fire ant), this protein is Pheromone-binding protein Gp-9.